We begin with the raw amino-acid sequence, 226 residues long: uncharacterized protein (226 aa).

The region spanning 1–92 (MNPNIAKISS…QLLHIAPKAK (92 aa)) is the HTH arsR-type domain. Residues 32 to 55 (AGELAYLANIKPQTASFHLNKLLE) constitute a DNA-binding region (H-T-H motif).

This is an uncharacterized protein from Bacillus subtilis (strain 168).